The primary structure comprises 182 residues: UPF0397 protein BCQ_2505 (182 aa).

5 helical membrane passes run 9–29, 40–60, 71–91, 114–134, and 142–162; these read VVAI…GFSI, AILT…IGLI, WGIW…MGFI, ITGL…DIIV, and IVIQ…VLGL.

Belongs to the UPF0397 family.

The protein resides in the cell membrane. This Bacillus cereus (strain Q1) protein is UPF0397 protein BCQ_2505.